Here is an 88-residue protein sequence, read N- to C-terminus: DNA-directed RNA polymerase subunit omega (88 aa).

Belongs to the RNA polymerase subunit omega family. As to quaternary structure, the RNAP catalytic core consists of 2 alpha, 1 beta, 1 beta' and 1 omega subunit. When a sigma factor is associated with the core the holoenzyme is formed, which can initiate transcription.

It carries out the reaction RNA(n) + a ribonucleoside 5'-triphosphate = RNA(n+1) + diphosphate. Promotes RNA polymerase assembly. Latches the N- and C-terminal regions of the beta' subunit thereby facilitating its interaction with the beta and alpha subunits. This Actinobacillus succinogenes (strain ATCC 55618 / DSM 22257 / CCUG 43843 / 130Z) protein is DNA-directed RNA polymerase subunit omega.